A 103-amino-acid polypeptide reads, in one-letter code: Trp operon repressor homolog (103 aa).

The DNA-binding element occupies Gln59–Ser82.

Belongs to the TrpR family. As to quaternary structure, homodimer.

The protein localises to the cytoplasm. In terms of biological role, this protein is an aporepressor. When complexed with L-tryptophan it binds the operator region of the trp operon and prevents the initiation of transcription. The protein is Trp operon repressor homolog of Vibrio parahaemolyticus serotype O3:K6 (strain RIMD 2210633).